Reading from the N-terminus, the 483-residue chain is CBL-interacting serine/threonine-protein kinase 19 (483 aa).

The region spanning 28-282 is the Protein kinase domain; it reads YEMGRLLGHG…MPDIMETSWF (255 aa). ATP contacts are provided by residues 34–42 and Lys-57; that span reads LGHGTFAKV. The Proton acceptor role is filled by Asp-150. Positions 168–197 are activation loop; the sequence is DFGLSAVSDQIRQDGLFHTFCGTPAYVAPE. Ser-172 is subject to Phosphoserine. Thr-186 is subject to Phosphothreonine. The segment covering 313–322 has biased composition (polar residues); sequence SVSGRSSTVS. A disordered region spans residues 313–338; that stretch reads SVSGRSSTVSEPEDFESFDGRRRGGS. One can recognise an NAF domain in the interval 340 to 364; the sequence is PRPASLNAFDLISFSPGFDLSGLFE. Residues 367-396 are PPI; it reads GEGSRFVSGAPVGQIISKLEEIARIVSFTV. The interval 459–483 is disordered; it reads NLSSENGQRVSGSRSLPSFLLSDTD.

This sequence belongs to the protein kinase superfamily. CAMK Ser/Thr protein kinase family. SNF1 subfamily. The cofactor is Mn(2+).

It carries out the reaction L-seryl-[protein] + ATP = O-phospho-L-seryl-[protein] + ADP + H(+). The catalysed reaction is L-threonyl-[protein] + ATP = O-phospho-L-threonyl-[protein] + ADP + H(+). CIPK serine-threonine protein kinases interact with CBL proteins. Binding of a CBL protein to the regulatory NAF domain of CIPK protein lead to the activation of the kinase in a calcium-dependent manner. In Arabidopsis thaliana (Mouse-ear cress), this protein is CBL-interacting serine/threonine-protein kinase 19 (CIPK19).